A 998-amino-acid polypeptide reads, in one-letter code: Antigenic heat-stable 120 kDa protein (998 aa).

Residues 1-69 (GGFMSQDHTG…LSGTISTDDQ (69 aa)) are disordered. Acidic residues predominate over residues 12–21 (ENDEGYESDI). Residues 46 to 68 (TPASSTQSTPAISTLSGTISTDD) are compositionally biased toward polar residues.

It is found in the cytoplasm. This chain is Antigenic heat-stable 120 kDa protein (sca4), found in Rickettsia akari.